A 2837-amino-acid polypeptide reads, in one-letter code: Probable polyketide synthase 3 (2837 aa).

A Ketosynthase family 3 (KS3) domain is found at 39-464; it reads NNGIGIIGIG…GSNVCIILKD (426 aa). Active-site for beta-ketoacyl synthase activity residues include Cys209, His348, and His388. Residues 664-697 are acyl/malonyl transferase; the sequence is GIKPTFIVGHSLGEVTAAYCSGMIDLETECYLIY. The active-site For acyl/malonyl transferase activity is the Ser674. The segment at 962–1084 is N-terminal hotdog fold; the sequence is IDILGNSITD…GNFQLFKHNG (123 aa). A PKS/mFAS DH domain is found at 962-1255; sequence IDILGNSITD…CTSLTPIQDS (294 aa). Residue His995 is the Proton acceptor; for dehydratase activity of the active site. The interval 1106 to 1255 is C-terminal hotdog fold; sequence NLTKLTKEDL…CTSLTPIQDS (150 aa). Asp1169 serves as the catalytic Proton donor; for dehydratase activity. Positions 2330–2407 constitute a Carrier domain; it reads DNKNSVNQMF…SSIKIITNSL (78 aa). O-(pantetheine 4'-phosphoryl)serine is present on Ser2367. The helical transmembrane segment at 2464-2484 threads the bilayer; sequence KVILLSGSTGFLGGYLLLNLV.

Pantetheine 4'-phosphate serves as cofactor.

It localises to the membrane. Its function is as follows. Probable polyketide synthase. In Dictyostelium discoideum (Social amoeba), this protein is Probable polyketide synthase 3 (pks3).